Reading from the N-terminus, the 100-residue chain is UPF0045 protein MJ1052 (100 aa).

This sequence belongs to the UPF0045 family.

The chain is UPF0045 protein MJ1052 from Methanocaldococcus jannaschii (strain ATCC 43067 / DSM 2661 / JAL-1 / JCM 10045 / NBRC 100440) (Methanococcus jannaschii).